The sequence spans 473 residues: Suppressor of SWI4 1 homolog (473 aa).

The region spanning 29–292 is the Brix domain; that stretch reads PHSFVFTRGC…LIKVQEGVGE (264 aa). Residues Ser238 and Ser240 each carry the phosphoserine modification. Residues 323–473 form a disordered region; the sequence is AQRQAQQAQN…GRGRPGKRVA (151 aa). Residues 324–334 show a composition bias toward low complexity; that stretch reads QRQAQQAQNVQ. The segment covering 335-352 has biased composition (basic and acidic residues); it reads RKQEQREAHRKKSLEGMK. Ser359 is subject to Phosphoserine. The segment covering 375 to 388 has biased composition (acidic residues); it reads LGEDDDEQEDDDIE. A compositionally biased stretch (basic residues) spans 409–421; sequence KRLAKSPGRKRKR. Residues 422 to 443 are compositionally biased toward basic and acidic residues; the sequence is WEMDRGRGRLCDQKFPKTKDKS. N6-acetyllysine is present on Lys438. The segment covering 462–473 has biased composition (basic residues); that stretch reads GRGRGRPGKRVA.

As to expression, widely expressed.

The protein localises to the nucleus. The protein resides in the nucleolus. Functionally, may have a role in cell growth. The polypeptide is Suppressor of SWI4 1 homolog (PPAN) (Homo sapiens (Human)).